A 151-amino-acid polypeptide reads, in one-letter code: Macrodomain Ter protein (151 aa).

The protein belongs to the MatP family. Homodimer.

It is found in the cytoplasm. Required for spatial organization of the terminus region of the chromosome (Ter macrodomain) during the cell cycle. Prevents early segregation of duplicated Ter macrodomains during cell division. Binds specifically to matS, which is a 13 bp signature motif repeated within the Ter macrodomain. The chain is Macrodomain Ter protein from Cronobacter sakazakii (strain ATCC BAA-894) (Enterobacter sakazakii).